Reading from the N-terminus, the 211-residue chain is MHNNSKKNIIWQKHSVTRIKREQKNGHKSIVIWFTGLSGSGKSSIANSLEEILFQNNFNTYLLDGDNIRSSLCSDLSFSILDRNENIRRIGEVSKLMIDAGIIVLVSVISPYRNQRKKIRLMLGKINFLEVFVDTPLNICEERDPKKLYQKSRLGKISDLTGIQSLYEIPEKPDLHLDETISLKNNTKKLIHILCDKNIISFPNIDETFLF.

36-43 (GLSGSGKS) is a binding site for ATP. The active-site Phosphoserine intermediate is the S110.

Belongs to the APS kinase family.

The enzyme catalyses adenosine 5'-phosphosulfate + ATP = 3'-phosphoadenylyl sulfate + ADP + H(+). The protein operates within sulfur metabolism; hydrogen sulfide biosynthesis; sulfite from sulfate: step 2/3. Catalyzes the synthesis of activated sulfate. The sequence is that of Adenylyl-sulfate kinase (cysC) from Buchnera aphidicola subsp. Schizaphis graminum (strain Sg).